Consider the following 490-residue polypeptide: Subtilisin-like protease 8 (490 aa).

Residues 1–26 (MKGLLSLSVLPVLAYASPMIVDSIHQ) form the signal peptide. Positions 27-134 (DAAPILSSTN…YIERDSEVRA (108 aa)) are excised as a propeptide. In terms of domain architecture, Inhibitor I9 spans 43–133 (SYIVVFKKGV…EYIERDSEVR (91 aa)). Residues 144 to 450 (PWGLARISHR…GGSDNYKEIV (307 aa)) form the Peptidase S8 domain. Catalysis depends on charge relay system residues D180 and H212. A glycan (N-linked (GlcNAc...) asparagine) is linked at N282. S378 serves as the catalytic Charge relay system. A glycan (N-linked (GlcNAc...) asparagine) is linked at N455.

Belongs to the peptidase S8 family.

It is found in the secreted. Its function is as follows. Secreted subtilisin-like serine protease with keratinolytic activity that contributes to pathogenicity. This chain is Subtilisin-like protease 8 (SUB8), found in Arthroderma otae (strain ATCC MYA-4605 / CBS 113480) (Microsporum canis).